We begin with the raw amino-acid sequence, 666 residues long: UvrABC system protein B (666 aa).

In terms of domain architecture, Helicase ATP-binding spans 26-414 (DSFQKGEKKV…KVVEQIIRPT (389 aa)). Residue 39-46 (GVTGSGKT) participates in ATP binding. The Beta-hairpin motif lies at 92-115 (YYDYYQPEAYVPSSDTFIEKDSSI). Residues 429–591 (QIEDLLVEIR…ITPLTIKKEV (163 aa)) form the Helicase C-terminal domain. The UVR domain occupies 625-660 (EVLKEKLREEMMKAAKELDFERAAILRDKMLSIQTE).

It belongs to the UvrB family. As to quaternary structure, forms a heterotetramer with UvrA during the search for lesions. Interacts with UvrC in an incision complex.

Its subcellular location is the cytoplasm. Functionally, the UvrABC repair system catalyzes the recognition and processing of DNA lesions. A damage recognition complex composed of 2 UvrA and 2 UvrB subunits scans DNA for abnormalities. Upon binding of the UvrA(2)B(2) complex to a putative damaged site, the DNA wraps around one UvrB monomer. DNA wrap is dependent on ATP binding by UvrB and probably causes local melting of the DNA helix, facilitating insertion of UvrB beta-hairpin between the DNA strands. Then UvrB probes one DNA strand for the presence of a lesion. If a lesion is found the UvrA subunits dissociate and the UvrB-DNA preincision complex is formed. This complex is subsequently bound by UvrC and the second UvrB is released. If no lesion is found, the DNA wraps around the other UvrB subunit that will check the other stand for damage. The protein is UvrABC system protein B of Leptospira interrogans serogroup Icterohaemorrhagiae serovar copenhageni (strain Fiocruz L1-130).